A 743-amino-acid polypeptide reads, in one-letter code: FHF complex subunit HOOK-interacting protein 2B (743 aa).

The interval 186–219 (CGEPTALPKDTTSHGDKDCSHDGAPARPQLDGES) is disordered. Residues 196-206 (TTSHGDKDCSH) show a composition bias toward basic and acidic residues.

It belongs to the FHIP family. As to expression, expressed in liver.

Its function is as follows. Able to activate MAPK/ERK and TGFB signaling pathways. May regulate the activity of genes involved in intestinal barrier function and immunoprotective inflammation. May play a role in cell proliferation. This is FHF complex subunit HOOK-interacting protein 2B from Homo sapiens (Human).